The sequence spans 494 residues: Aspartyl/glutamyl-tRNA(Asn/Gln) amidotransferase subunit B (494 aa).

It belongs to the GatB/GatE family. GatB subfamily. In terms of assembly, heterotrimer of A, B and C subunits.

The enzyme catalyses L-glutamyl-tRNA(Gln) + L-glutamine + ATP + H2O = L-glutaminyl-tRNA(Gln) + L-glutamate + ADP + phosphate + H(+). It carries out the reaction L-aspartyl-tRNA(Asn) + L-glutamine + ATP + H2O = L-asparaginyl-tRNA(Asn) + L-glutamate + ADP + phosphate + 2 H(+). In terms of biological role, allows the formation of correctly charged Asn-tRNA(Asn) or Gln-tRNA(Gln) through the transamidation of misacylated Asp-tRNA(Asn) or Glu-tRNA(Gln) in organisms which lack either or both of asparaginyl-tRNA or glutaminyl-tRNA synthetases. The reaction takes place in the presence of glutamine and ATP through an activated phospho-Asp-tRNA(Asn) or phospho-Glu-tRNA(Gln). This Rhodopseudomonas palustris (strain HaA2) protein is Aspartyl/glutamyl-tRNA(Asn/Gln) amidotransferase subunit B.